The sequence spans 363 residues: Two-pore potassium channel 1 (363 aa).

The tract at residues 1–61 is disordered; sequence MSSDAARTPL…DDVKIDEPPP (61 aa). Topologically, residues 1-78 are cytoplasmic; that stretch reads MSSDAARTPL…FSDLNPNLRR (78 aa). The span at 31–42 shows a compositional bias: basic residues; the sequence is SSRKRRLRRSRS. The chain crosses the membrane as a helical span at residues 79–99; it reads VIMFLALYLTIGTLCFYLVRD. Residues 111–130 constitute an intramembrane region (pore-forming); the sequence is DALYFCIVTMTTVGYGDLVP. Residues 137 to 157 traverse the membrane as a helical segment; that stretch reads LLACAFVFSGMVLVGHLLSRA. At 158–197 the chain is on the cytoplasmic side; it reads ADYLVEKQEALLVRAFHLRQSFGPTDILKELHTNKLRYKC. The helical transmembrane segment at 198–218 threads the bilayer; it reads YATCLVLVVLFIVGTIFLVMV. An intramembrane region (pore-forming) is located at residues 225 to 244; sequence SAFYCVCSTVTTLGYGDKSF. The helical transmembrane segment at 251 to 271 threads the bilayer; the sequence is LFAVFWILTSSICLAQFFLYV. Residues 272 to 363 lie on the Cytoplasmic side of the membrane; sequence AELNTENKQR…LAQTTSQIQR (92 aa). EF-hand domains are found at residues 288-323 and 327-362; these read LTRR…EMGK and KDIS…SQIQ. The short motif at 296–298 is the Endoplasmic reticulum release signal element; it reads DLE. 9 residues coordinate Ca(2+): D301, D303, D305, E312, D340, D342, S344, T346, and D351.

It belongs to the two pore domain potassium channel (TC 1.A.1.7) family. In terms of assembly, homodimer. Interacts with GRF1 and GRF6, but only GRF6 modulates the channel activity. Post-translationally, phosphorylation at Ser-42 increases and stabilizes the interaction with 14-3-3 proteins. In terms of tissue distribution, detected in mesophyll cells, guard cells and vascular tissues of the leaves. Expressed in the hilum, where the funiculus is attached during fruit maturation and in the embryo. Also expressed at a lower level in seedlings, root tips and elongation zones, and flowers. Could be detected in mitotically active tissues.

It is found in the vacuole membrane. Could be activated by protein kinase C. Strongly induced by calcium. Blocked by barium, tetraethylammonium (TEA), quinine and quinidine. Its function is as follows. Voltage-independent, large conductance and potassium-selective tonoplast ion channel. Regulated by cytoplasmic calcium and pH. Does not mediate slow-vacuolar (SV) ionic currents, but essential to establish VK currents. Has some permeability for Rb(+) and NH(4)(+), but none for Na(+), Cs(+) or Li(+). Involved in intracellular K(+) redistribution and/or K(+) retranslocation between different tissues. The polypeptide is Two-pore potassium channel 1 (TPK1) (Arabidopsis thaliana (Mouse-ear cress)).